Reading from the N-terminus, the 216-residue chain is MKINTVLFDLDGTLINTNELIISSFLHTLHTYYPNQYKREDVLPFIGPSLHDTFSKIDESKVEELITSYRQFNHDHHDELVEEYETVYETVQELKKQGYKVGIVTTKARQTVEMGLKFSKLDEFFDVVVTIDDVEHVKPHPEPLQKALQLLDAKPEEALMVGDNHHDIVGGQNAGTKTAAVSWTLKGRAYLEAYKPDFMLDKMSDLLPILSDMNRS.

The Nucleophile role is filled by Asp-9.

This sequence belongs to the HAD-like hydrolase superfamily. PpaX family. The cofactor is Mg(2+).

The catalysed reaction is diphosphate + H2O = 2 phosphate + H(+). Functionally, hydrolyzes pyrophosphate formed during P-Ser-HPr dephosphorylation by HPrK/P. Might play a role in controlling the intracellular pyrophosphate pool. The protein is Pyrophosphatase PpaX of Bacillus cereus (strain ATCC 10987 / NRS 248).